A 962-amino-acid polypeptide reads, in one-letter code: Putative RNA Helicase B962L (962 aa).

The Helicase ATP-binding domain occupies 43–229; it reads IPTSLADRVL…FGIGKENIIL (187 aa). 56-63 contributes to the ATP binding site; it reads SRTGSGKS. A DEAH box motif is present at residues 167 to 170; the sequence is DEAH. The Helicase C-terminal domain occupies 253 to 459; that stretch reads ACETALTIHK…TIKKNKEGVF (207 aa). A helical transmembrane segment spans residues 521 to 541; it reads GYFWQAAISDIATILAVVSVA.

The protein belongs to the DEAD box helicase family. DEAH subfamily.

It localises to the host membrane. The protein resides in the virion. It carries out the reaction ATP + H2O = ADP + phosphate + H(+). The protein is Putative RNA Helicase B962L of African swine fever virus (isolate Warthog/Namibia/Wart80/1980) (ASFV).